A 590-amino-acid chain; its full sequence is Glutamine--fructose-6-phosphate aminotransferase [isomerizing] (590 aa).

Cys2 (nucleophile; for GATase activity) is an active-site residue. The 220-residue stretch at 2–221 (CGIIGIVSSK…DGELGFITTS (220 aa)) folds into the Glutamine amidotransferase type-2 domain. 2 SIS domains span residues 286 to 422 (IIAE…DNTN) and 445 to 580 (IGEE…PDKP). The For Fru-6P isomerization activity role is filled by Lys585.

In terms of assembly, homodimer.

It is found in the cytoplasm. It carries out the reaction D-fructose 6-phosphate + L-glutamine = D-glucosamine 6-phosphate + L-glutamate. Functionally, catalyzes the first step in hexosamine metabolism, converting fructose-6P into glucosamine-6P using glutamine as a nitrogen source. This is Glutamine--fructose-6-phosphate aminotransferase [isomerizing] from Sulfolobus acidocaldarius (strain ATCC 33909 / DSM 639 / JCM 8929 / NBRC 15157 / NCIMB 11770).